The chain runs to 176 residues: Large ribosomal subunit protein uL6 (176 aa).

It belongs to the universal ribosomal protein uL6 family. Part of the 50S ribosomal subunit.

Its function is as follows. This protein binds to the 23S rRNA, and is important in its secondary structure. It is located near the subunit interface in the base of the L7/L12 stalk, and near the tRNA binding site of the peptidyltransferase center. The protein is Large ribosomal subunit protein uL6 of Burkholderia ambifaria (strain ATCC BAA-244 / DSM 16087 / CCUG 44356 / LMG 19182 / AMMD) (Burkholderia cepacia (strain AMMD)).